A 31-amino-acid chain; its full sequence is Morintide mO3 (31 aa).

The region spanning 1–30 (NRLCCSQYGFCGTTSEYCSRANGCQSNCWG) is the Chitin-binding type-1 domain. Intrachain disulfides connect Cys-4–Cys-18 and Cys-24–Cys-28.

Seeds (at protein level).

Functionally, chitin-binding protein which functions in defense against chitin-containing fungal pathogens. In Moringa oleifera (Horseradish tree), this protein is Morintide mO3.